The chain runs to 476 residues: Adenosylhomocysteinase (476 aa).

3 residues coordinate substrate: threonine 67, aspartate 142, and glutamate 202. An NAD(+)-binding site is contributed by threonine 203–threonine 205. Substrate contacts are provided by lysine 232 and aspartate 236. Residues asparagine 237, glycine 266 to glycine 271, glutamate 289, asparagine 324, isoleucine 345 to histidine 347, and asparagine 390 each bind NAD(+).

This sequence belongs to the adenosylhomocysteinase family. NAD(+) is required as a cofactor.

It is found in the cytoplasm. The catalysed reaction is S-adenosyl-L-homocysteine + H2O = L-homocysteine + adenosine. It functions in the pathway amino-acid biosynthesis; L-homocysteine biosynthesis; L-homocysteine from S-adenosyl-L-homocysteine: step 1/1. Functionally, may play a key role in the regulation of the intracellular concentration of adenosylhomocysteine. This Prochlorococcus marinus (strain MIT 9211) protein is Adenosylhomocysteinase.